A 202-amino-acid chain; its full sequence is MTDNELGIELNEPLVSVEEYLAAGVHIGTQQKDNDMKDFIYRVRSDGLYIIDIRKTDERIKQVAKFLARYEPAKIFVVTSRQYGQYPAQKFADTIGALSHVGRFIPGTLTNPKLPKYVEPSVVIVTDPIGDAQVITEAVQCGMPVIALCDINNRTNNVDLVIPTNNKGRKALSMVYFLLTKEFLRQKGIVSAMTVEDFESEF.

The protein belongs to the universal ribosomal protein uS2 family.

The sequence is that of Small ribosomal subunit protein uS2 from Methanocorpusculum labreanum (strain ATCC 43576 / DSM 4855 / Z).